We begin with the raw amino-acid sequence, 186 residues long: TATA box-binding protein-like 1 (186 aa).

Belongs to the TBP family.

The protein localises to the cytoplasm. It is found in the nucleus. Functionally, part of a specialized transcription system that mediates the transcription of most ribosomal proteins through the 5'-TCT-3' motif which is a core promoter element at these genes. Seems to also mediate the transcription of NF1. Does not bind the TATA box. Members of the TBP family are differentially required to regulate transcription and development during early embryogenesis. Particularly regulates genes that have a role in catabolism. The polypeptide is TATA box-binding protein-like 1 (tbpl1) (Xenopus tropicalis (Western clawed frog)).